Reading from the N-terminus, the 70-residue chain is Exodeoxyribonuclease 7 small subunit (70 aa).

It belongs to the XseB family. In terms of assembly, heterooligomer composed of large and small subunits.

The protein localises to the cytoplasm. It carries out the reaction Exonucleolytic cleavage in either 5'- to 3'- or 3'- to 5'-direction to yield nucleoside 5'-phosphates.. Functionally, bidirectionally degrades single-stranded DNA into large acid-insoluble oligonucleotides, which are then degraded further into small acid-soluble oligonucleotides. The polypeptide is Exodeoxyribonuclease 7 small subunit (Streptococcus sanguinis (strain SK36)).